The primary structure comprises 594 residues: MIPAVTDDDPLEDPLDDDVAPGLDDAEPEPEPRDEHDEPSRPATGSRIGGWVARRGSRFGKGVLDRCAPLSAAIGGGLALWLSFPPIGWWFTAFPGLALLGWVLTRTATTKAGGFGYGVLFGLAFYVPLLPWISGLVGAVPWLALAFAESLFCGLFGLGAVVVVRLPGWPLWFATLWVAAEWAKSTFPFGGFPWGASSYGQTNGPLLALARIGGAPLVSFAVALIGFSLTLLTAQIVWWWRHGHKPGVPAPAVMLPGVAIAASLLVTALVWPQVRQSGTGAGDDTAVTVAAVQGNVPRLGLEFNAQRRAVLDNHVKETLRLADDVKAGRAAQPMFVIWPENSSDIDPLLNADASAQITTAAEAIDAPILVGGVVRADGYTPDNPVANNTVIVWEPTDGPGERHDKQIVQPFGEYLPWRGFFKHLSSYADRAGYFVPGTGTGVVHAAGVPIGITTCWEVIFDRAARESVLNGAQVLAVPSNNATFDEAMSAQQLAFGKLRAVEHDRYVVVAGTTGISAVIAPDGHEISRTEWFQPAYLDNQIRLKTDLTPATKWGPIVQAVLVIAGVAVLLIAILHNGRFAPRMLRRRSATTVKR.

The span at 1–29 (MIPAVTDDDPLEDPLDDDVAPGLDDAEPE) shows a compositional bias: acidic residues. The tract at residues 1 to 48 (MIPAVTDDDPLEDPLDDDVAPGLDDAEPEPEPRDEHDEPSRPATGSRI) is disordered. Over 1–67 (MIPAVTDDDP…RFGKGVLDRC (67 aa)) the chain is Cytoplasmic. A compositionally biased stretch (basic and acidic residues) spans 30–40 (PEPRDEHDEPS). Residues 68 to 87 (APLSAAIGGGLALWLSFPPI) traverse the membrane as a helical segment. Residues 88–116 (GWWFTAFPGLALLGWVLTRTATTKAGGFG) lie on the Extracellular side of the membrane. Residues 117–134 (YGVLFGLAFYVPLLPWIS) traverse the membrane as a helical segment. The Cytoplasmic segment spans residues 135–138 (GLVG). Residues 139-160 (AVPWLALAFAESLFCGLFGLGA) traverse the membrane as a helical segment. The Extracellular segment spans residues 161–221 (VVVVRLPGWP…IGGAPLVSFA (61 aa)). Residues 222–239 (VALIGFSLTLLTAQIVWW) traverse the membrane as a helical segment. The Cytoplasmic segment spans residues 240 to 251 (WRHGHKPGVPAP). A helical transmembrane segment spans residues 252–269 (AVMLPGVAIAASLLVTAL). Over 270–554 (VWPQVRQSGT…TDLTPATKWG (285 aa)) the chain is Extracellular. A CN hydrolase domain is found at 287–543 (VTVAAVQGNV…PAYLDNQIRL (257 aa)). The active-site Proton acceptor is Glu-340. Residue Lys-405 is part of the active site. Residue Cys-455 is the Nucleophile of the active site. Residues 555–572 (PIVQAVLVIAGVAVLLIA) traverse the membrane as a helical segment. The Cytoplasmic portion of the chain corresponds to 573–594 (ILHNGRFAPRMLRRRSATTVKR).

This sequence belongs to the CN hydrolase family. Apolipoprotein N-acyltransferase subfamily. As to quaternary structure, interacts with Ppm1 (AC A0QZ12) upon coexpression in E.coli, which increases the PPM synthase activity of Ppm1.

It localises to the cell membrane. It carries out the reaction N-terminal S-1,2-diacyl-sn-glyceryl-L-cysteinyl-[lipoprotein] + a glycerophospholipid = N-acyl-S-1,2-diacyl-sn-glyceryl-L-cysteinyl-[lipoprotein] + a 2-acyl-sn-glycero-3-phospholipid + H(+). It participates in protein modification; lipoprotein biosynthesis (N-acyl transfer). Catalyzes the phospholipid dependent N-acylation of the N-terminal cysteine of apolipoprotein, the last step in lipoprotein maturation. Can transfer a number of fatty acids (C16 and C19, palmitic and probably tuberculostearic acids respectively are shown). Enhances the polyprenol monophosphomannose (PPM) synthase activity of Ppm1 (AC A0QZ12) without itself having PPM synthase catalytic activity. The polypeptide is Apolipoprotein N-acyltransferase (Mycolicibacterium smegmatis (strain ATCC 700084 / mc(2)155) (Mycobacterium smegmatis)).